The sequence spans 182 residues: UPF0301 protein NMCC_1249 (182 aa).

The protein belongs to the UPF0301 (AlgH) family.

The chain is UPF0301 protein NMCC_1249 from Neisseria meningitidis serogroup C (strain 053442).